We begin with the raw amino-acid sequence, 145 residues long: LIM domain only protein 3 (145 aa).

LIM zinc-binding domains are found at residues 11–73 (KGCA…LFGV) and 75–137 (GNCA…GLMK).

The protein is LIM domain only protein 3 (LMO3) of Bos taurus (Bovine).